The sequence spans 139 residues: Nucleoside diphosphate kinase (139 aa).

ATP is bound by residues K10, F58, R86, T92, R104, and N114. Catalysis depends on H117, which acts as the Pros-phosphohistidine intermediate.

This sequence belongs to the NDK family. Homotetramer. Mg(2+) is required as a cofactor.

The protein localises to the cytoplasm. The catalysed reaction is a 2'-deoxyribonucleoside 5'-diphosphate + ATP = a 2'-deoxyribonucleoside 5'-triphosphate + ADP. It catalyses the reaction a ribonucleoside 5'-diphosphate + ATP = a ribonucleoside 5'-triphosphate + ADP. Major role in the synthesis of nucleoside triphosphates other than ATP. The ATP gamma phosphate is transferred to the NDP beta phosphate via a ping-pong mechanism, using a phosphorylated active-site intermediate. In Nocardia farcinica (strain IFM 10152), this protein is Nucleoside diphosphate kinase.